The primary structure comprises 506 residues: MEEFQGYLELDRYQQHDFLYPLIFREYIYALAHDHGLNRSILLDNVGYDTKYSLLIIKRLISRMYQQNHLIISANDSNQNQFFGYNKNLYSQMMSEGFAVIVEIPFSLRLVSSLEATEIVKSYNLRSIHSIFPFLEDKFPHLNYVSDVLIPYPIHLEILVQTLRYWVKDPSSLHLLRFFLHEYYNWNSLITPKKIIFSKSNPRLFLLLYNSHVCEYESILLFLRNQSSHLRLTSSGIFFERIHFYEKKKYPVPVEKVFVNDFPAAILWFFKDPFMHYVRYQGKSILSSKDTPLLMNKWKYYLVNLWQCHSYVWSQPGRIYINQLSKHSLDFLGYFSSMRPNLSVVRGQMLENSFIMDNAMKKLDTLVPIIPLIGSLAKVKFCNALGHPISKSTWADSSDFDIIDRFVHICRNLSHYYSGSSRKKSLYRIKYILRLSCVKTLARKHKSTVRTFLKRLGYKLLDEFFTEEEQILSLIFPRASYTLKKFYRGRIWYLDIFCINDLVNHE.

The protein belongs to the intron maturase 2 family. MatK subfamily.

The protein resides in the plastid. Its subcellular location is the chloroplast. Usually encoded in the trnK tRNA gene intron. Probably assists in splicing its own and other chloroplast group II introns. This Crataegus monogyna (Hawthorn) protein is Maturase K.